We begin with the raw amino-acid sequence, 371 residues long: Aminomethyltransferase (371 aa).

This sequence belongs to the GcvT family. The glycine cleavage system is composed of four proteins: P, T, L and H.

The catalysed reaction is N(6)-[(R)-S(8)-aminomethyldihydrolipoyl]-L-lysyl-[protein] + (6S)-5,6,7,8-tetrahydrofolate = N(6)-[(R)-dihydrolipoyl]-L-lysyl-[protein] + (6R)-5,10-methylene-5,6,7,8-tetrahydrofolate + NH4(+). The glycine cleavage system catalyzes the degradation of glycine. The polypeptide is Aminomethyltransferase (Pectobacterium carotovorum subsp. carotovorum (strain PC1)).